The following is a 209-amino-acid chain: Pyridoxine/pyridoxamine 5'-phosphate oxidase (209 aa).

Substrate-binding positions include 7 to 10 (REDY) and Lys64. FMN contacts are provided by residues 59-64 (RIVLLK), 74-75 (FT), Arg80, and Lys81. Substrate contacts are provided by Tyr121, Arg125, and Ser129. FMN is bound by residues 138–139 (QS) and Trp182. 188–190 (RLH) is a binding site for substrate. Arg192 contributes to the FMN binding site.

It belongs to the pyridoxamine 5'-phosphate oxidase family. As to quaternary structure, homodimer. The cofactor is FMN.

The catalysed reaction is pyridoxamine 5'-phosphate + O2 + H2O = pyridoxal 5'-phosphate + H2O2 + NH4(+). It catalyses the reaction pyridoxine 5'-phosphate + O2 = pyridoxal 5'-phosphate + H2O2. It functions in the pathway cofactor metabolism; pyridoxal 5'-phosphate salvage; pyridoxal 5'-phosphate from pyridoxamine 5'-phosphate: step 1/1. The protein operates within cofactor metabolism; pyridoxal 5'-phosphate salvage; pyridoxal 5'-phosphate from pyridoxine 5'-phosphate: step 1/1. In terms of biological role, catalyzes the oxidation of either pyridoxine 5'-phosphate (PNP) or pyridoxamine 5'-phosphate (PMP) into pyridoxal 5'-phosphate (PLP). This Actinobacillus pleuropneumoniae serotype 3 (strain JL03) protein is Pyridoxine/pyridoxamine 5'-phosphate oxidase.